We begin with the raw amino-acid sequence, 103 residues long: UPF0145 protein BCE_1095 (103 aa).

The protein belongs to the UPF0145 family.

In Bacillus cereus (strain ATCC 10987 / NRS 248), this protein is UPF0145 protein BCE_1095.